We begin with the raw amino-acid sequence, 296 residues long: 2-methylisocitrate lyase (296 aa).

45–47 (SGG) is a substrate binding site. Mg(2+) contacts are provided by aspartate 85 and aspartate 87. Residues 123–124 (CG), arginine 158, glutamate 188, 210–212 (NIT), arginine 241, and arginine 270 contribute to the substrate site.

It belongs to the isocitrate lyase/PEP mutase superfamily. Methylisocitrate lyase family. As to quaternary structure, homotetramer; dimer of dimers. Mg(2+) is required as a cofactor.

The enzyme catalyses (2S,3R)-3-hydroxybutane-1,2,3-tricarboxylate = pyruvate + succinate. The protein operates within organic acid metabolism; propanoate degradation. Functionally, involved in the catabolism of short chain fatty acids (SCFA) via the 2-methylcitrate cycle I (propionate degradation route). Catalyzes the thermodynamically favored C-C bond cleavage of (2R,3S)-2-methylisocitrate to yield pyruvate and succinate via an alpha-carboxy-carbanion intermediate. This is 2-methylisocitrate lyase from Escherichia coli (strain K12).